Here is a 468-residue protein sequence, read N- to C-terminus: Putative proline/betaine transporter (468 aa).

Helical transmembrane passes span 20-42 (VFAT…YTTA), 63-83 (FAAL…FGII), 91-111 (VVLT…GVLP), 115-135 (MIGL…GFST), 164-184 (IGTL…SFFL), 191-211 (AWGW…GLYL), 246-266 (ILVC…VTAY), 284-304 (VLIT…GKLA), 312-332 (VFLI…SLLN), 336-356 (LPFI…YEAT), 376-396 (VTFN…NSWL), and 403-423 (IYAP…VIAV).

This sequence belongs to the major facilitator superfamily. Metabolite:H+ Symporter (MHS) family (TC 2.A.1.6) family.

It is found in the cell membrane. Its function is as follows. May be a proton symporter involved in the uptake of osmolytes such as proline and glycine betaine. This chain is Putative proline/betaine transporter (proP), found in Staphylococcus haemolyticus (strain JCSC1435).